Consider the following 99-residue polypeptide: High mobility group protein I (99 aa).

The segment at 1–99 is disordered; it reads MSDSPVKKGR…ADTEEVNSSD (99 aa). Ser-4 bears the Phosphoserine; by CDC2 and MAPK mark. The a.T hook 1 DNA-binding region spans 7–19; that stretch reads KKGRGRPAKAKPE. Residues 16–46 are compositionally biased toward basic and acidic residues; the sequence is AKPEETASPKAAKKEEKKVEEVPKKIEESTK. Ser-23 is modified (phosphoserine; by MAPK). Positions 54 to 66 form a DNA-binding region, a.T hook 2; it reads KKGRGRPSKGDKA. The residue at position 73 (Ser-73) is a Phosphoserine; by PKC. The a.T hook 3 DNA-binding region spans 74 to 86; that stretch reads GKGRGRPAKNAKK. Positions 90-99 are enriched in acidic residues; that stretch reads ADTEEVNSSD.

The protein belongs to the HMGA family. Phosphorylated in a cell-cycle dependent manner; substantially reduced in cells that have finished proliferating and are differentiated. Phosphorylation at Ser-4 and Ser-23 results in a 10-fold weakening of DNA-binding activity and altered the mode of protein-DNA interaction.

Its subcellular location is the nucleus. It localises to the nucleolus. It is found in the chromosome. Functionally, binds preferentially to the minor groove of A+T rich regions in double-stranded DNA via the second and third DBA-binding domains. It is suggested that these proteins could function in nucleosome phasing and in the 3'-end processing of mRNA transcripts. They are also involved in the transcription regulation of genes containing, or in close proximity to A+T-rich regions. The chain is High mobility group protein I from Chironomus tentans (Midge).